Here is a 1002-residue protein sequence, read N- to C-terminus: MVRLYNLHPFGSQQVVPCQWEPEQVCCGGSDALFVAAGCKVEAFAVQGEELCRQRCAFSTLGRVLRMAYSEAGDYLVAIEEKNKTIFLRAYVNWRSKRSDNSRVCIRMVGHNVEASFCESFRDQMSIIEMPMSEAPLCFSCCPVKGDLLVGCTNKLVLFTLKYDIINEEFSILNFERSLIIHIDNITPVEISFCVGYVAVMSDLEVLLLKLESDPIHGESVDHHPQETSNPLKEAEGVSNETSQLESEDFVICLKPMELIGEKCEQSGISVKLESTGLEDEKVKYLRVRHLLYRRFAPDISSYVLSDNIKLHSLQLLPIHQSGFHPDENDLSPKKEMPNLFCFFSLPHVGYLYMVVKSVELMSVYWYPEKSQQAVLTPQFLHVITSQSLQCFTVRCSAAVAHEEDLYMDTTLKACPPVSMDVCALRIQLFIGLKAICHFKNHIILLTKAEPEAIPERRESPKKLISRKDASVRSGTPHVAEAAWNLYLVNTTAPVQLYKEMVDYSNSYKTVKTESCLHLLSEAHLLVRAALMDGSQLEPAEKAELLEAFKESCGHLGDCYSRLTTEQSHLALPYYKMSGLSLAEVLARVDWTEESESQKYERGLVFYINHSLYENLDEELSKELAAKVAQIFHMAEPKQLPHVLSSPSMKNIDPLTALHYLRKLDSCGVSPVLVTLTKAAVALKMGDLDMYRNEMKSHSEMKLVYGFILEPRLLIQQWKGQIVPTELAIDLKETQPGLLVASVLGLQKNDKIGIVETDSFFKVLCGKDEDAVPQLLIDFWEAQLVACLPNVVLEELFFKLISQYVWRLSERRCPDTVPLRTAEDLINACSHYGLVNPWVHVLTTSDSLADKNYTDDLLKLQSLICSPSLDVASIIPFLEPLSEDTVAGLSTHALCHTRLQEYEQCIDTLLERCPEAVIAYANQELKEDHWILWWKKLLPELCQRVKSGGERSHLHLSLLKETLSVIAVGLDLRDFLNVLPEDGAAAFFLPYLLFCSRKKSLT.

Residues 218-239 (GESVDHHPQETSNPLKEAEGVS) form a disordered region.

In terms of assembly, component of the biogenesis of lysosome-related organelles complex-2 (or BLOC2) composed of HPS3, HPS5 and HPS6. Interacts with HPS5 and HPS6. In terms of tissue distribution, found in heart, brain, spleen, liver, lung, kidney and testis.

Its subcellular location is the cytoplasm. It localises to the cytosol. Its function is as follows. Involved in early stages of melanosome biogenesis and maturation. This is BLOC-2 complex member HPS3 (Hps3) from Mus musculus (Mouse).